Consider the following 389-residue polypeptide: MELGKSIENQNNVVARLAKKVIETDVANGSNVVFSPMSINVLLSLIAAGSNPVTKEEILSFLMSPSTDHLNAVLAKIADGGTERSDLCLSTAHGVWIDKSSYLKPSFKELLENSYKASCSQVDFATKPVEVIDEVNIWADVHTNGLIKQILSRDCTDTIKEIRNSTLILANAVYFKAAWSRKFDAKLTKDNDFHLLDGNTVKVPFMMSYKDQYLRGYDGFQVLRLPYVEDKRHFSMYIYLPNDKDGLAALLEKISTEPGFLDSHIPLHRTPVDALRIPKLNFSFEFKASEVLKDMGLTSPFTSKGNLTEMVDSPSNGDKLHVSSIIHKACIEVDEEGTEAAAVSVAIMMPQCLMRNPDFVADHPFLFTVREDNSGVILFIGQVLDPSKH.

The tract at residues 337 to 361 (GTEAAAVSVAIMMPQCLMRNPDFVA) is RCL.

The protein belongs to the serpin family.

Probable serine protease inhibitor. In Arabidopsis thaliana (Mouse-ear cress), this protein is Serpin-Z3.